A 727-amino-acid polypeptide reads, in one-letter code: AN1-type zinc finger protein 4 (727 aa).

The region spanning Met-28 to Gly-103 is the Ubiquitin-like domain. Disordered regions lie at residues His-187–Asn-217 and Lys-238–Ser-264. The span at Lys-238 to Pro-248 shows a compositional bias: basic residues. The AN1-type zinc finger occupies Lys-661–Gly-708. 8 residues coordinate Zn(2+): Cys-667, Cys-670, Cys-682, Cys-684, Cys-689, His-692, His-698, and Cys-700.

This chain is AN1-type zinc finger protein 4 (ZFAND4), found in Homo sapiens (Human).